Reading from the N-terminus, the 157-residue chain is Large ribosomal subunit protein uL13m (157 aa).

The transit peptide at 1 to 29 (MSTLNGQTALAYAKVWHHVSAKNVPLGRL) directs the protein to the mitochondrion.

It belongs to the universal ribosomal protein uL13 family. As to quaternary structure, component of the mitochondrial large ribosomal subunit (mt-LSU). Mature yeast 74S mitochondrial ribosomes consist of a small (37S) and a large (54S) subunit. The 37S small subunit contains a 15S ribosomal RNA (15S mt-rRNA) and at least 32 different proteins. The 54S large subunit contains a 21S rRNA (21S mt-rRNA) and at least 45 different proteins.

The protein resides in the mitochondrion. In terms of biological role, component of the mitochondrial ribosome (mitoribosome), a dedicated translation machinery responsible for the synthesis of mitochondrial genome-encoded proteins, including at least some of the essential transmembrane subunits of the mitochondrial respiratory chain. The mitoribosomes are attached to the mitochondrial inner membrane and translation products are cotranslationally integrated into the membrane. This Schizosaccharomyces pombe (strain 972 / ATCC 24843) (Fission yeast) protein is Large ribosomal subunit protein uL13m.